The following is a 207-amino-acid chain: HTH-type transcriptional regulator AqdR (207 aa).

Residues 16–76 form the HTH tetR-type domain; sequence ARFRERVLDA…DALLTRTQAE (61 aa). Residues 39-58 constitute a DNA-binding region (H-T-H motif); sequence GFADVARKAGVNGVSLYRRW.

Functionally, may regulate the expression of genes involved in the degradation of the Pseudomonas aeruginosa quorum sensing signal molecules HHQ (2-heptyl-4-quinolone) and PQS (2-heptyl-3-hydroxy-4-quinolone). The chain is HTH-type transcriptional regulator AqdR from Rhodococcus erythropolis (Arthrobacter picolinophilus).